We begin with the raw amino-acid sequence, 372 residues long: Aminomethyltransferase (372 aa).

This sequence belongs to the GcvT family. As to quaternary structure, the glycine cleavage system is composed of four proteins: P, T, L and H.

The catalysed reaction is N(6)-[(R)-S(8)-aminomethyldihydrolipoyl]-L-lysyl-[protein] + (6S)-5,6,7,8-tetrahydrofolate = N(6)-[(R)-dihydrolipoyl]-L-lysyl-[protein] + (6R)-5,10-methylene-5,6,7,8-tetrahydrofolate + NH4(+). The glycine cleavage system catalyzes the degradation of glycine. This Burkholderia cenocepacia (strain ATCC BAA-245 / DSM 16553 / LMG 16656 / NCTC 13227 / J2315 / CF5610) (Burkholderia cepacia (strain J2315)) protein is Aminomethyltransferase.